Consider the following 663-residue polypeptide: RING finger protein 145 (663 aa).

Helical transmembrane passes span 53-73 (YLAL…LTLP), 77-97 (LVQL…HQIS), 123-143 (FTTA…VMKT), 146-166 (IWLF…VPLE), 168-188 (IVII…YFLG), 205-222 (LVQV…MSLW), 225-245 (LVVP…QIYS), 275-295 (YSLL…LTLC), 316-336 (TEGV…LQVV), 340-360 (FLLS…MLEI), 384-404 (SLCL…CQFF), 410-430 (LLII…TLFI), 460-480 (LLEF…TIFG), and 482-502 (WTVM…WLRA). Residues 81–84 (YLYF) carry the YLYF motif motif. The active site involves Cys537. The RING-type; atypical zinc-finger motif lies at 537–575 (CAICYQDMKSAVITPCSHFFHAGCLKKWLYVQDTCPLCH). The tract at residues 587–663 (LGTEAAPQPP…EGEVCPVESA (77 aa)) is disordered. The segment covering 619 to 628 (GTGTQEGSGD) has biased composition (polar residues).

Interacts (via YLYF motif) with INSIG1 and INSIG2.

The protein localises to the endoplasmic reticulum membrane. The enzyme catalyses S-ubiquitinyl-[E2 ubiquitin-conjugating enzyme]-L-cysteine + [acceptor protein]-L-lysine = [E2 ubiquitin-conjugating enzyme]-L-cysteine + N(6)-ubiquitinyl-[acceptor protein]-L-lysine.. In terms of biological role, E3 ubiquitin ligase that catalyzes the direct transfer of ubiquitin from E2 ubiquitin-conjugating enzyme to a specific substrate. In response to bacterial infection, negatively regulates the phagocyte oxidative burst by controlling the turnover of the NADPH oxidase complex subunits. Promotes monoubiquitination of CYBA and 'Lys-48'-linked polyubiquitination and degradation of CYBB NADPH oxidase catalytic subunits, both essential for the generation of antimicrobial reactive oxygen species. Involved in the maintenance of cholesterol homeostasis. In response to high sterol concentrations ubiquitinates HMGCR, a rate-limiting enzyme in cholesterol biosynthesis, and targets it for degradation. The interaction with INSIG1 is required for this function. In addition, triggers ubiquitination of SCAP, likely inhibiting its transport to the Golgi apparatus and the subsequent processing/maturation of SREBPF2, ultimately down-regulating cholesterol biosynthesis. This Mus musculus (Mouse) protein is RING finger protein 145.